The following is a 120-amino-acid chain: Large ribosomal subunit protein uL18 (120 aa).

It belongs to the universal ribosomal protein uL18 family. As to quaternary structure, part of the 50S ribosomal subunit; part of the 5S rRNA/L5/L18/L25 subcomplex. Contacts the 5S and 23S rRNAs.

Its function is as follows. This is one of the proteins that bind and probably mediate the attachment of the 5S RNA into the large ribosomal subunit, where it forms part of the central protuberance. This Treponema denticola (strain ATCC 35405 / DSM 14222 / CIP 103919 / JCM 8153 / KCTC 15104) protein is Large ribosomal subunit protein uL18.